The following is a 404-amino-acid chain: MEDITQLLSDVLEDLVESELKQFTRQLWIGVKPGVEPIPRGKLENKDRQDVVDSMVQQYSEDAGTITVQTLRKIKQNERAKRLESNLLKVQSQGQENKQNSEEPQPIPQIISQPIQQIISQPINNAGSEDLQPIQADWQRPRQIIPCSQETKNTLLKAHGDDIYTPRSGTQRKGLALLITNIQFANTQHNRNGADRDEENAEWLLRSLGFAVIKYRNLSGKDIRRAVENFSKRREHEDADSTFIVIMSHGTRIDNKDAIVGVSDDVYFIEETFSHLNSVNCPALIDKPKVILIQACRGGQSSGVLAQDSVFASDSWVHMEKDFVCFMSTMPNTFAYRNPIEGSFFISYIVDVFCSSAHRDDIMELFRKVTLRMEKDQRFQGQAKLLPCIERTSISKRFYLFPGL.

A propeptide spanning residues 1–171 is cleaved from the precursor; sequence MEDITQLLSD…DIYTPRSGTQ (171 aa). The Pyrin domain occupies 8-80; the sequence is LSDVLEDLVE…LRKIKQNERA (73 aa). Active-site residues include H249 and C296. The propeptide occupies 301 to 316; the sequence is SSGVLAQDSVFASDSW.

This sequence belongs to the peptidase C14A family. As to quaternary structure, upon direct LPS-binding, forms large homooligomers, resulting in its activation. These oligomers are often referred to as 'non-canonical inflammasomes'. Heterotetramer that consists of two anti-parallel arranged heterodimers, each one formed by a 20 kDa (p20) and a 10 kDa (p10) subunit. Interacts with caspa. Interacts with pycard; the interaction only occurs in the presence of nlrp1. Component of NLRP1 inflammasomes. Inflammasomes are supramolecular complexes that assemble in the cytosol in response to pathogens and other damage-associated signals and play critical roles in innate immunity and inflammation. The NLRP1 inflammasome is composed of the signal sensor nlrp1, and the adapter pycard (asc), which recruit effector pro-inflammatory caspases caspa and/or caspb. The interaction between nlrp1 and pycard is required for the sequential recruitment of caspa and then caspb. Caspa is preferentially recruited first and this causes the cleavage of pro-il1b into the midformed il1b. This is followed by the recruitment of caspb, which is activated and cleaves the midformed il1b resulting in il1b maturation. The two subunits are derived from the precursor sequence by an autocatalytic mechanism. Expressed in the spleen, kidney and liver, and highly expressed in the gills and gut.

The protein resides in the inflammasome. It is found in the cytoplasm. It carries out the reaction Strict requirement for Asp at the P1 position. It has a preferred cleavage sequence of Tyr-Val-Ala-Asp-|- but also cleaves at Asp-Glu-Val-Asp-|-.. Its activity is regulated as follows. Activated by homooligomerization induced by direct binding to cytosolic LPS. In terms of biological role, thiol protease which cleaves IL-1 beta (il1b), releasing the mature cytokine which is involved in a variety of inflammatory processes, and mediates apoptosis. Component of the NLRP1 inflammasome, which plays a crucial role in innate immunity and inflammation. In response to pathogens and other damage-associated signals, recruited to the NLRP1 inflammasome in its precursor form following the recruitment of caspase caspa. Its subsequent activation causes the cleavage of the midformed pro-il1b and results in il1b maturation and secretion in the extracellular milieu. Activated by direct binding to bacterial lipopolysaccharides (LPS), which causes non-canonical inflammasome activation and results in the pyroptosis of infected cells and their extrusion into the gut lumen, as well as in cytokine secretion. Plays a crucial role in the restriction of bacterial infection to intestinal sites. Pyroptosis limits bacterial replication, while cytokine secretion promotes the recruitment and activation of immune cells and triggers mucosal inflammation. Promotes pyroptosis by bacterial infection by E.piscicida. The chain is Caspase b from Danio rerio (Zebrafish).